A 220-amino-acid chain; its full sequence is Aspartic protease inhibitor 4 (220 aa).

The N-terminal stretch at 1-23 (MMKCLFLLCLCLLPILVFSSTFT) is a signal peptide. Positions 24-32 (SQNPINLPS) are excised as a propeptide. Residues 26–31 (NPINLP) carry the Vacuolar targeting signal motif. Asn-51 is a glycosylation site (N-linked (GlcNAc...) asparagine). Cystine bridges form between Cys-80/Cys-125 and Cys-174/Cys-185.

Belongs to the protease inhibitor I3 (leguminous Kunitz-type inhibitor) family. As to expression, tubers.

The protein resides in the vacuole. In terms of biological role, inhibits tightly cathepsin D (aspartic protease) and weakly trypsin (serine protease). May protect the plant by inhibiting proteases of invading organisms. The chain is Aspartic protease inhibitor 4 from Solanum tuberosum (Potato).